The chain runs to 348 residues: NADH-ubiquinone oxidoreductase chain 2 (348 aa).

The next 9 helical transmembrane spans lie at 1 to 21, 60 to 80, 96 to 116, 149 to 169, 177 to 194, 198 to 220, 238 to 258, 273 to 293, and 328 to 348; these read MSPY…TITA, FLTQ…NAWL, TLII…TWLP, NPTL…WGGL, ILAY…LILQ, TLTL…TFIL, ILTS…PLTG, DLAP…YFYL, and MAAS…LFNI.

This sequence belongs to the complex I subunit 2 family.

The protein localises to the mitochondrion inner membrane. The catalysed reaction is a ubiquinone + NADH + 5 H(+)(in) = a ubiquinol + NAD(+) + 4 H(+)(out). Functionally, core subunit of the mitochondrial membrane respiratory chain NADH dehydrogenase (Complex I) that is believed to belong to the minimal assembly required for catalysis. Complex I functions in the transfer of electrons from NADH to the respiratory chain. The immediate electron acceptor for the enzyme is believed to be ubiquinone. The polypeptide is NADH-ubiquinone oxidoreductase chain 2 (MT-ND2) (Tetraodon nigroviridis (Spotted green pufferfish)).